The primary structure comprises 580 residues: E3 ubiquitin-protein ligase TRIM45 (580 aa).

The RING-type zinc-finger motif lies at 29-98; that stretch reads CPTCLRLFKV…QIGILCPVCD (70 aa). B box-type zinc fingers lie at residues 130–176 and 186–227; these read GQGL…MVDL and GKPI…YDFT. Zn(2+)-binding residues include C135, C138, C158, H162, C191, H194, C214, and H219. A coiled-coil region spans residues 249-329; sequence VEALEDALAQ…LLADMRTGVE (81 aa). Residues 394–497 form a Filamin repeat; the sequence is TQEVDPAQCV…VQGSPFNVTV (104 aa).

Belongs to the TRIM/RBCC family.

The protein localises to the cytoplasm. Its subcellular location is the nucleus. It catalyses the reaction S-ubiquitinyl-[E2 ubiquitin-conjugating enzyme]-L-cysteine + [acceptor protein]-L-lysine = [E2 ubiquitin-conjugating enzyme]-L-cysteine + N(6)-ubiquitinyl-[acceptor protein]-L-lysine.. Functionally, E3 ubiquitin-protein ligase that plays a role in the regulation of inflammatory response. Mechanistically, mediates the 'Lys-48'-linked polyubiquitination of TAB2, a regulatory protein of the kinase TAK1, leading to its degradation via the proteasomal pathway and inhibition of the TLR-mediated inflammatory immune response. May act as a transcriptional repressor in mitogen-activated protein kinase signaling pathway. The polypeptide is E3 ubiquitin-protein ligase TRIM45 (Trim45) (Mus musculus (Mouse)).